The primary structure comprises 300 residues: Lysenin-related protein 1 (300 aa).

The N-terminal cap domain stretch occupies residues 12-35; the sequence is EEIEVDVVSVWKEGYAYENRGNSS. Residues 36 to 109 form a beta-hairpin domain region; it reads VQQKITMTKG…SQVIEHTVTI (74 aa). The tract at residues 110–158 is N-terminal cap domain; it reads PPNKKFTRWKLNADVGGTGIEYMYLIDEVTAIGADLTIPEVNKSRAKIL. A C-terminal receptor-binding domain region spans residues 159-299; the sequence is VGRQIHLGET…EDKWILEVVN (141 aa). 4 residues coordinate an N-(acyl)-sphingosylphosphocholine: Lys-187, Ser-229, Tyr-235, and Tyr-284. The cysteines at positions 274 and 285 are disulfide-linked.

This sequence belongs to the lysenin family. As to quaternary structure, binds to sphingomyelin as a monomer by using its C-terminal domain. Forms a nonamer when sphingomyelin/LRP-1 ratio is lower than ca 500. Oligomerization, but not binding, is influenced by the fluidity of sphingomyelin. Expressed by coelomocytes.

The protein resides in the secreted. It is found in the target cell membrane. Pore-forming toxin that specifically binds sphingomyelin in the plasma membrane of various cells. Has hemolytic activity. Binding and hemolytic activities of this toxin are 10 times less than those of lysenin and lysenin-related protein 2. This is Lysenin-related protein 1 from Eisenia fetida (Red wiggler worm).